A 432-amino-acid chain; its full sequence is Hexuronate transporter (432 aa).

The first 31 residues, methionine 1–alanine 31, serve as a signal peptide directing secretion. Residues alanine 33 to serine 48 lie on the Periplasmic side of the membrane. Residues tyrosine 49–leucine 69 form a helical membrane-spanning segment. The Cytoplasmic portion of the chain corresponds to aspartate 70–lysine 75. The helical transmembrane segment at isoleucine 76–glycine 96 threads the bilayer. Residues serine 97–glycine 99 are Periplasmic-facing. Residues glycine 100–leucine 120 traverse the membrane as a helical segment. Over lysine 121 to tyrosine 138 the chain is Cytoplasmic. Residues phenylalanine 139–valine 159 traverse the membrane as a helical segment. At methionine 160–glutamine 164 the chain is on the periplasmic side. A helical membrane pass occupies residues methionine 165 to tyrosine 185. Residues lysine 186–arginine 236 are Cytoplasmic-facing. Residues phenylalanine 237 to valine 257 traverse the membrane as a helical segment. The Periplasmic segment spans residues tyrosine 258–glutamate 264. Residues isoleucine 265 to tyrosine 285 form a helical membrane-spanning segment. Residues leucine 286 to tryptophan 293 are Cytoplasmic-facing. A helical membrane pass occupies residues phenylalanine 294–isoleucine 314. Residues glycine 315–glycine 317 lie on the Periplasmic side of the membrane. A helical membrane pass occupies residues methionine 318–alanine 338. Topologically, residues histidine 339 to serine 369 are cytoplasmic. Residues alanine 370–phenylalanine 390 form a helical membrane-spanning segment. Serine 391 is a topological domain (periplasmic). The helical transmembrane segment at proline 392 to leucine 412 threads the bilayer. Residues glutamine 413–histidine 432 lie on the Cytoplasmic side of the membrane.

The protein belongs to the major facilitator superfamily. Phthalate permease family.

The protein resides in the cell inner membrane. It carries out the reaction aldehydo-D-glucuronate(in) + H(+)(in) = aldehydo-D-glucuronate(out) + H(+)(out). The catalysed reaction is aldehydo-D-galacturonate(out) + H(+)(out) = aldehydo-D-galacturonate(in) + H(+)(in). Functionally, transport of aldohexuronates such as D-glucuronate and D-galacturonate. This chain is Hexuronate transporter (exuT), found in Escherichia coli O157:H7.